The chain runs to 315 residues: Homoserine O-succinyltransferase (315 aa).

Residue cysteine 142 is the Acyl-thioester intermediate of the active site. Residues lysine 163 and serine 192 each coordinate substrate. Histidine 235 acts as the Proton acceptor in catalysis. Glutamate 237 is an active-site residue. Residue arginine 249 participates in substrate binding. The span at 249–258 shows a compositional bias: basic and acidic residues; the sequence is RDCEKSDNAP. The interval 249–271 is disordered; that stretch reads RDCEKSDNAPKPENYFPDDDATK.

Belongs to the MetA family.

Its subcellular location is the cytoplasm. The catalysed reaction is L-homoserine + succinyl-CoA = O-succinyl-L-homoserine + CoA. It functions in the pathway amino-acid biosynthesis; L-methionine biosynthesis via de novo pathway; O-succinyl-L-homoserine from L-homoserine: step 1/1. In terms of biological role, transfers a succinyl group from succinyl-CoA to L-homoserine, forming succinyl-L-homoserine. This is Homoserine O-succinyltransferase from Pseudoalteromonas translucida (strain TAC 125).